The sequence spans 574 residues: 5'-nucleotidase (574 aa).

Residues 1 to 26 (MCPRAARAPATLLLALGAVLWPAAGA) form the signal peptide. Zn(2+) is bound by residues Asp-36 and His-38. Cysteines 51 and 57 form a disulfide. Asn-53 carries N-linked (GlcNAc...) asparagine glycosylation. Asp-85, Asn-117, His-220, and His-243 together coordinate Zn(2+). 2 N-linked (GlcNAc...) asparagine glycosylation sites follow: Asn-311 and Asn-333. Disulfide bonds link Cys-353/Cys-358 and Cys-365/Cys-387. Residue Arg-354 participates in AMP binding. Arg-354 serves as a coordination point for IMP. Residues Asn-390 and Arg-395 each coordinate AMP. IMP contacts are provided by Asn-390 and Arg-395. The N-linked (GlcNAc...) asparagine glycan is linked to Asn-403. An AMP-binding site is contributed by Phe-417. An IMP-binding site is contributed by Phe-417. A disulfide bridge connects residues Cys-476 and Cys-479. AMP-binding residues include Phe-500 and Asp-506. IMP contacts are provided by Phe-500 and Asp-506. A lipid anchor (GPI-anchor amidated serine) is attached at Ser-549. Residues 550–574 (TGSHCHGSFSLIFLSLWAVIFVLYQ) constitute a propeptide, removed in mature form.

It belongs to the 5'-nucleotidase family. Homodimer. Zn(2+) is required as a cofactor.

The protein localises to the cell membrane. The enzyme catalyses a ribonucleoside 5'-phosphate + H2O = a ribonucleoside + phosphate. It catalyses the reaction a 2'-deoxyribonucleoside 5'-phosphate + H2O = a 2'-deoxyribonucleoside + phosphate. It carries out the reaction dTMP + H2O = thymidine + phosphate. The catalysed reaction is CMP + H2O = cytidine + phosphate. The enzyme catalyses IMP + H2O = inosine + phosphate. It catalyses the reaction AMP + H2O = adenosine + phosphate. It carries out the reaction GMP + H2O = guanosine + phosphate. The catalysed reaction is UMP + H2O = uridine + phosphate. The enzyme catalyses dAMP + H2O = 2'-deoxyadenosine + phosphate. It catalyses the reaction dCMP + H2O = 2'-deoxycytidine + phosphate. Inhibited by adenosine 5'-(alpha,beta-methylene)-diphosphate (AMPCP). Catalyzes the hydrolysis of nucleotide monophosphates, releasing inorganic phosphate and the corresponding nucleoside, with AMP being the preferred substrate. Shows a preference for ribonucleotide monophosphates over their equivalent deoxyribose forms. Other substrates include IMP, UMP, GMP, CMP, dAMP, dCMP, dTMP, NAD and NMN. This chain is 5'-nucleotidase (NT5E), found in Homo sapiens (Human).